Consider the following 1009-residue polypeptide: MICAL-like protein 2 (1009 aa).

Residues 1-107 (MAAIKALQEW…YVSQYYNYFH (107 aa)) enclose the Calponin-homology (CH) domain. Positions 1–260 (MAAIKALQEW…KSSNLASRKP (260 aa)) are forms an intramolecular interaction with the C-terminal coiled coil domain keeping the protein in a closed conformation. Residues S110, S143, and S153 each carry the phosphoserine modification. Disordered stretches follow at residues 114–180 (GMAG…PGTA), 247–268 (SVSP…ADTR), 348–447 (NSSP…TSKV), and 655–834 (SPSI…TSPV). Polar residues predominate over residues 144–171 (PAQTQRSPLSPARTNPVVQRNEGGSQRP). The region spanning 186–248 (SICGVCGKHV…THHSSEVTSV (63 aa)) is the LIM zinc-binding domain. At S249 the chain carries Phosphoserine. Residues 261–393 (GGVTADTRPF…QGQTASKGVK (133 aa)) form a necessary and sufficient for interaction with actinins region. Residues 261-805 (GGVTADTRPF…EDGTRSCKEE (545 aa)) form a mediates targeting to the cell plasma membrane region. Over residues 348 to 419 (NSSPIGWSSP…AWTSSASKTQ (72 aa)) the composition is skewed to polar residues. The segment covering 430 to 442 (PSAPAPASAPAPA) has biased composition (pro residues). The segment covering 694–730 (EGWRARLKPVDKKTPAGRSLEQKEPVLAEPRIGDTSR) has biased composition (basic and acidic residues). 2 stretches are compositionally biased toward low complexity: residues 731–746 (KASS…TLTS) and 755–769 (PAGS…SPSP). Phosphoserine is present on residues S766 and S768. Residues 791–817 (EPKKQEDGTRSCKEEKSPTRWSRERSA) show a composition bias toward basic and acidic residues. A forms an intramolecular interaction with the N-terminal Calponin-homology and LIM zinc-binding domains-containing region keeping the protein in a closed conformation region spans residues 806–913 (KSPTRWSRER…LMYKSKDQRL (108 aa)). Position 832 is a phosphoserine (S832). A bMERB domain is found at 833–980 (PVRLHPDYIP…EQEEDQMLEN (148 aa)). Residues 841–880 (IPQEELQRQLQDIESQLDALELRGVELEKRLRAAEGDASE) adopt a coiled-coil conformation. The interval 913-1009 (LEEQQLDLQG…WSSKSKSGQA (97 aa)) is mediates interaction with RAB13 and is required for transition from the closed to the open conformation.

Interacts with RAB13 (GTP-bound form); competes with RAB8A and is involved in tight junctions assembly. Interacts with RAB8A; competes with RAB13 and is involved in E-cadherin endocytic recycling. Interacts with RAB8B. Interacts (preferentially in opened conformation) with ACTN1 and ACTN4; stimulated by RAB13 activation. Interacts (via calponin-homology (CH) domain) with the filamins FLNA, FLNB and FLNC (via actin-binding domain). In terms of tissue distribution, detected in brain, lung, liver and kidney (at protein level).

It localises to the cell membrane. The protein resides in the cell junction. It is found in the tight junction. Its subcellular location is the recycling endosome. The protein localises to the cell projection. It localises to the neuron projection. The protein resides in the cytoplasm. It is found in the cytoskeleton. Its function is as follows. Effector of small Rab GTPases RAB8A and RAB13 which is involved in junctional complexes assembly through the regulation of cell adhesion molecules transport to the plasma membrane and actin cytoskeleton reorganization. Regulates the endocytic recycling of occludins, claudins and E-cadherin to the plasma membrane and may thereby regulate the establishment of tight junctions and adherens junctions. In parallel, may regulate actin cytoskeleton reorganization directly through interaction with F-actin or indirectly through actinins and filamins. Undergoes liquid-liquid phase separation to form tubular recycling endosomes. Plays 2 sequential roles in the biogenesis of tubular recycling endosomes: first organizes phase separation and then the closed form formed by interaction with RAB8A promotes endosomal tubulation. The sequence is that of MICAL-like protein 2 (Micall2) from Mus musculus (Mouse).